The chain runs to 172 residues: Small ribosomal subunit protein uS5 (172 aa).

The region spanning 17–80 is the S5 DRBM domain; it reads LKEKMIAINR…EEARRNMTKV (64 aa).

The protein belongs to the universal ribosomal protein uS5 family. In terms of assembly, part of the 30S ribosomal subunit. Contacts proteins S4 and S8.

Functionally, with S4 and S12 plays an important role in translational accuracy. Located at the back of the 30S subunit body where it stabilizes the conformation of the head with respect to the body. The chain is Small ribosomal subunit protein uS5 from Polaromonas naphthalenivorans (strain CJ2).